Reading from the N-terminus, the 349-residue chain is DNA polymerase IV (349 aa).

In terms of domain architecture, UmuC spans 4–185; sequence IIHIDCDCFY…LPVAKLHGVG (182 aa). Mg(2+)-binding residues include Asp8 and Asp103. The active site involves Glu104.

This sequence belongs to the DNA polymerase type-Y family. In terms of assembly, monomer. Requires Mg(2+) as cofactor.

It is found in the cytoplasm. It catalyses the reaction DNA(n) + a 2'-deoxyribonucleoside 5'-triphosphate = DNA(n+1) + diphosphate. Poorly processive, error-prone DNA polymerase involved in untargeted mutagenesis. Copies undamaged DNA at stalled replication forks, which arise in vivo from mismatched or misaligned primer ends. These misaligned primers can be extended by PolIV. Exhibits no 3'-5' exonuclease (proofreading) activity. May be involved in translesional synthesis, in conjunction with the beta clamp from PolIII. This is DNA polymerase IV from Pseudomonas aeruginosa (strain UCBPP-PA14).